The primary structure comprises 561 residues: Dihydroxy-acid dehydratase (561 aa).

Cys-51 serves as a coordination point for [2Fe-2S] cluster. Asp-83 contributes to the Mg(2+) binding site. Residue Cys-124 participates in [2Fe-2S] cluster binding. 2 residues coordinate Mg(2+): Asp-125 and Lys-126. At Lys-126 the chain carries N6-carboxylysine. Cys-196 lines the [2Fe-2S] cluster pocket. Glu-448 provides a ligand contact to Mg(2+). The Proton acceptor role is filled by Ser-473.

This sequence belongs to the IlvD/Edd family. As to quaternary structure, homodimer. The cofactor is [2Fe-2S] cluster. Requires Mg(2+) as cofactor.

It carries out the reaction (2R)-2,3-dihydroxy-3-methylbutanoate = 3-methyl-2-oxobutanoate + H2O. It catalyses the reaction (2R,3R)-2,3-dihydroxy-3-methylpentanoate = (S)-3-methyl-2-oxopentanoate + H2O. Its pathway is amino-acid biosynthesis; L-isoleucine biosynthesis; L-isoleucine from 2-oxobutanoate: step 3/4. The protein operates within amino-acid biosynthesis; L-valine biosynthesis; L-valine from pyruvate: step 3/4. Functions in the biosynthesis of branched-chain amino acids. Catalyzes the dehydration of (2R,3R)-2,3-dihydroxy-3-methylpentanoate (2,3-dihydroxy-3-methylvalerate) into 2-oxo-3-methylpentanoate (2-oxo-3-methylvalerate) and of (2R)-2,3-dihydroxy-3-methylbutanoate (2,3-dihydroxyisovalerate) into 2-oxo-3-methylbutanoate (2-oxoisovalerate), the penultimate precursor to L-isoleucine and L-valine, respectively. The protein is Dihydroxy-acid dehydratase of Sulfolobus acidocaldarius (strain ATCC 33909 / DSM 639 / JCM 8929 / NBRC 15157 / NCIMB 11770).